The sequence spans 216 residues: Glycerol-3-phosphate acyltransferase (216 aa).

5 helical membrane-spanning segments follow: residues Leu11–Val31, Leu62–Ser82, Val95–Leu115, Ala132–Phe152, and Leu171–Ile191.

This sequence belongs to the PlsY family. In terms of assembly, probably interacts with PlsX.

It is found in the cell inner membrane. It catalyses the reaction an acyl phosphate + sn-glycerol 3-phosphate = a 1-acyl-sn-glycero-3-phosphate + phosphate. It functions in the pathway lipid metabolism; phospholipid metabolism. Catalyzes the transfer of an acyl group from acyl-phosphate (acyl-PO(4)) to glycerol-3-phosphate (G3P) to form lysophosphatidic acid (LPA). This enzyme utilizes acyl-phosphate as fatty acyl donor, but not acyl-CoA or acyl-ACP. The polypeptide is Glycerol-3-phosphate acyltransferase (Rhodospirillum rubrum (strain ATCC 11170 / ATH 1.1.1 / DSM 467 / LMG 4362 / NCIMB 8255 / S1)).